The sequence spans 180 residues: Inner membrane-spanning protein YciB (180 aa).

The next 5 membrane-spanning stretches (helical) occupy residues 22-42 (IFVA…FTWF), 50-70 (MTLV…AFHS), 72-92 (LFIK…LLVS), 121-141 (MSWA…AFWL), and 149-169 (FKVF…GVYI).

It belongs to the YciB family.

Its subcellular location is the cell inner membrane. Functionally, plays a role in cell envelope biogenesis, maintenance of cell envelope integrity and membrane homeostasis. This chain is Inner membrane-spanning protein YciB, found in Yersinia enterocolitica serotype O:8 / biotype 1B (strain NCTC 13174 / 8081).